The chain runs to 392 residues: ATP phosphoribosyltransferase regulatory subunit (392 aa).

This sequence belongs to the class-II aminoacyl-tRNA synthetase family. HisZ subfamily. In terms of assembly, heteromultimer composed of HisG and HisZ subunits.

It localises to the cytoplasm. It participates in amino-acid biosynthesis; L-histidine biosynthesis; L-histidine from 5-phospho-alpha-D-ribose 1-diphosphate: step 1/9. Required for the first step of histidine biosynthesis. May allow the feedback regulation of ATP phosphoribosyltransferase activity by histidine. The polypeptide is ATP phosphoribosyltransferase regulatory subunit (Prochlorococcus marinus (strain MIT 9313)).